Reading from the N-terminus, the 221-residue chain is Putative 3-methyladenine DNA glycosylase (221 aa).

This sequence belongs to the DNA glycosylase MPG family.

The polypeptide is Putative 3-methyladenine DNA glycosylase (Herpetosiphon aurantiacus (strain ATCC 23779 / DSM 785 / 114-95)).